We begin with the raw amino-acid sequence, 399 residues long: Formate-dependent phosphoribosylglycinamide formyltransferase (399 aa).

N(1)-(5-phospho-beta-D-ribosyl)glycinamide contacts are provided by residues 21-22 (EL) and Glu81. Residues Arg114, Lys156, 161 to 166 (SSGKGQ), 196 to 199 (EGFI), and Glu204 contribute to the ATP site. Residues 119–314 (RLAAEELGLP…EFELHARAIL (196 aa)) form the ATP-grasp domain. Mg(2+)-binding residues include Glu273 and Glu285. N(1)-(5-phospho-beta-D-ribosyl)glycinamide contacts are provided by residues Asp292, Lys361, and 368 to 369 (RR). The segment at 370 to 399 (MGVAVANGESTDQARERAKLAASKVRPTRT) is disordered.

This sequence belongs to the PurK/PurT family. In terms of assembly, homodimer.

It carries out the reaction N(1)-(5-phospho-beta-D-ribosyl)glycinamide + formate + ATP = N(2)-formyl-N(1)-(5-phospho-beta-D-ribosyl)glycinamide + ADP + phosphate + H(+). The protein operates within purine metabolism; IMP biosynthesis via de novo pathway; N(2)-formyl-N(1)-(5-phospho-D-ribosyl)glycinamide from N(1)-(5-phospho-D-ribosyl)glycinamide (formate route): step 1/1. Functionally, involved in the de novo purine biosynthesis. Catalyzes the transfer of formate to 5-phospho-ribosyl-glycinamide (GAR), producing 5-phospho-ribosyl-N-formylglycinamide (FGAR). Formate is provided by PurU via hydrolysis of 10-formyl-tetrahydrofolate. The sequence is that of Formate-dependent phosphoribosylglycinamide formyltransferase from Dechloromonas aromatica (strain RCB).